The sequence spans 779 residues: Filament-like plant protein 1 (779 aa).

Residues 1–14 (MEKRKRESSERSFG) show a composition bias toward basic and acidic residues. Disordered regions lie at residues 1-55 (MEKR…ETEK), 253-274 (ASFNDHRSTDSHSDGGERMDVS), and 315-336 (PETPDGNGKSGPESVTEEVVVP). Residues 47–200 (VSLEVETEKE…KENVMLRHEL (154 aa)) are a coiled coil. The segment covering 256-272 (NDHRSTDSHSDGGERMD) has biased composition (basic and acidic residues). The segment covering 324–336 (SGPESVTEEVVVP) has biased composition (low complexity). Positions 337-674 (SENSLASEIE…ANCQKTIASL (338 aa)) form a coiled coil. Positions 718 to 731 (FMTRNHPESIKPTK) are enriched in basic and acidic residues. The segment at 718 to 764 (FMTRNHPESIKPTKETSPSSSSSTASAAVSMPVSTNRGSSEKNRNGF) is disordered. Residues 733 to 752 (TSPSSSSSTASAAVSMPVST) show a composition bias toward low complexity.

Belongs to the FPP family. Interacts with WPP/MAF proteins.

In Arabidopsis thaliana (Mouse-ear cress), this protein is Filament-like plant protein 1 (FPP1).